The sequence spans 185 residues: Adenine phosphoribosyltransferase (185 aa).

It belongs to the purine/pyrimidine phosphoribosyltransferase family. In terms of assembly, homodimer.

The protein localises to the cytoplasm. It carries out the reaction AMP + diphosphate = 5-phospho-alpha-D-ribose 1-diphosphate + adenine. It functions in the pathway purine metabolism; AMP biosynthesis via salvage pathway; AMP from adenine: step 1/1. In terms of biological role, catalyzes a salvage reaction resulting in the formation of AMP, that is energically less costly than de novo synthesis. This chain is Adenine phosphoribosyltransferase, found in Kineococcus radiotolerans (strain ATCC BAA-149 / DSM 14245 / SRS30216).